Reading from the N-terminus, the 832-residue chain is tRNA ligase (832 aa).

The active-site N6-AMP-lysine intermediate is the lysine 108.

This sequence belongs to the TRL1 family.

It catalyses the reaction ATP + (ribonucleotide)n-3'-hydroxyl + 5'-phospho-(ribonucleotide)m = (ribonucleotide)n+m + AMP + diphosphate.. In terms of biological role, one of the two proteins required for the splicing of precursor tRNA molecules containing introns. The ligation activity requires three enzymatic activities: phosphorylation of the 5' terminus of the 3' half-tRNA in the presence of ATP, opening of the 2'3'-cyclic phosphodiester bond of the 5' half-tRNA leaving a 2'-phosphomonoester and ligation of the two tRNA halves in an ATP-dependent reaction. The sequence is that of tRNA ligase (LIG1) from Candida albicans (strain SC5314 / ATCC MYA-2876) (Yeast).